We begin with the raw amino-acid sequence, 283 residues long: MQTESSRREAAAATEQLFAANRAQGSVQFDVRAVDGVTRRGKLHESGSLRVRFPSPEQQGLSAVLVNTAGGVAGGDRFSIDIAVGESARLTLTTAAAEKIYRSHGPSAQLDITLKVADDGHLGWLPQETILFDQARVERRIDIELAPRASLLLCESVIFGRSAMGETMRHGRFIDRWRLRVGGKLVFAETVRLDGEIGALLDRPAVAKGGVAVGTALIAPGDSELVERLRENADLFGAEVGITAWNGIAMARFCAQDAARLRADMMAVLRRAAGRALPRLWLS.

This sequence belongs to the UreD family. As to quaternary structure, ureD, UreF and UreG form a complex that acts as a GTP-hydrolysis-dependent molecular chaperone, activating the urease apoprotein by helping to assemble the nickel containing metallocenter of UreC. The UreE protein probably delivers the nickel.

It is found in the cytoplasm. Required for maturation of urease via the functional incorporation of the urease nickel metallocenter. In Rhodopseudomonas palustris (strain BisB5), this protein is Urease accessory protein UreD.